The primary structure comprises 422 residues: Isocitrate dehydrogenase [NADP] (422 aa).

An NADP(+)-binding site is contributed by T94. Residues S103, N105, R109, R119, and R143 each coordinate D-threo-isocitrate. D310 contacts Mg(2+). NADP(+) is bound by residues 344 to 350, N357, Y396, and R400; that span reads HGTAPKY.

This sequence belongs to the isocitrate and isopropylmalate dehydrogenases family. In terms of assembly, homodimer. Mg(2+) serves as cofactor. Mn(2+) is required as a cofactor.

The enzyme catalyses D-threo-isocitrate + NADP(+) = 2-oxoglutarate + CO2 + NADPH. In terms of biological role, catalyzes the oxidative decarboxylation of isocitrate to 2-oxoglutarate and carbon dioxide with the concomitant reduction of NADP(+). This Staphylococcus aureus (strain COL) protein is Isocitrate dehydrogenase [NADP] (icd).